We begin with the raw amino-acid sequence, 445 residues long: Zinc finger protein 296 (445 aa).

Residues 1 to 10 are compositionally biased toward basic residues; it reads MSRRKAGRVP. The interval 1–20 is disordered; the sequence is MSRRKAGRVPRRVDPDTDTD. A Glycyl lysine isopeptide (Lys-Gly) (interchain with G-Cter in SUMO2) cross-link involves residue lysine 31. A disordered region spans residues 62 to 88; sequence SRPLGAPSTCAPRMPLSSKSSDRQPWT. 3 C2H2-type zinc fingers span residues 138–161, 212–234, and 240–262; these read LSCL…QWDH, PTCD…MRSH, and YSCD…KKTH. The disordered stretch occupies residues 256–359; the sequence is NRHKKTHRQL…TAPRKSHGPG (104 aa). Over residues 269-278 the composition is skewed to polar residues; it reads SPSTSASSRG. A compositionally biased stretch (gly residues) spans 320–332; that stretch reads PGSGAQGGPGFVG. The segment covering 338–351 has biased composition (basic and acidic residues); sequence KVERTDPVKIEKTA. C2H2-type zinc fingers lie at residues 360-382, 388-410, and 418-441; these read GKCE…RRSH, YTCD…RRTH, and VKCP…RQKH.

It belongs to the krueppel C2H2-type zinc-finger protein family. Interacts with KLF4. In terms of tissue distribution, strongly expressed in testis and embryonic stem cells.

It is found in the nucleus. In terms of biological role, may be a transcriptional corepressor with KLF4. The chain is Zinc finger protein 296 from Mus musculus (Mouse).